The primary structure comprises 283 residues: Movement protein (283 aa).

This sequence belongs to the cucumovirus movement protein family.

The protein resides in the host cell junction. The protein localises to the host plasmodesma. Transports viral genome to neighboring plant cells directly through plasmosdesmata, without any budding. The movement protein allows efficient cell to cell propagation, by bypassing the host cell wall barrier. Acts by forming a tubular structure at the host plasmodesmata, enlarging it enough to allow free passage of virion capsids. The protein is Movement protein of Cucumis sativus (Cucumber).